We begin with the raw amino-acid sequence, 155 residues long: 6,7-dimethyl-8-ribityllumazine synthase (155 aa).

Residues Phe23, 57-59 (AFE), and 81-83 (AVI) each bind 5-amino-6-(D-ribitylamino)uracil. A (2S)-2-hydroxy-3-oxobutyl phosphate-binding site is contributed by 86–87 (AT). His89 functions as the Proton donor in the catalytic mechanism. Phe114 contributes to the 5-amino-6-(D-ribitylamino)uracil binding site. A (2S)-2-hydroxy-3-oxobutyl phosphate-binding site is contributed by Arg128.

It belongs to the DMRL synthase family.

It carries out the reaction (2S)-2-hydroxy-3-oxobutyl phosphate + 5-amino-6-(D-ribitylamino)uracil = 6,7-dimethyl-8-(1-D-ribityl)lumazine + phosphate + 2 H2O + H(+). Its pathway is cofactor biosynthesis; riboflavin biosynthesis; riboflavin from 2-hydroxy-3-oxobutyl phosphate and 5-amino-6-(D-ribitylamino)uracil: step 1/2. Its function is as follows. Catalyzes the formation of 6,7-dimethyl-8-ribityllumazine by condensation of 5-amino-6-(D-ribitylamino)uracil with 3,4-dihydroxy-2-butanone 4-phosphate. This is the penultimate step in the biosynthesis of riboflavin. The chain is 6,7-dimethyl-8-ribityllumazine synthase from Geotalea daltonii (strain DSM 22248 / JCM 15807 / FRC-32) (Geobacter daltonii).